Reading from the N-terminus, the 74-residue chain is Class I heat shock protein (74 aa).

The tract at residues 1–20 (ILQISGERNVEKEDKNDTWH) is disordered. The 74-residue stretch at 1 to 74 (ILQISGERNV…PDVKAIEISG (74 aa)) folds into the sHSP domain. Residues 8 to 20 (RNVEKEDKNDTWH) are compositionally biased toward basic and acidic residues.

The protein belongs to the small heat shock protein (HSP20) family. Forms oligomeric structures.

Its subcellular location is the cytoplasm. In Glycine max (Soybean), this protein is Class I heat shock protein (HSP6834-A).